We begin with the raw amino-acid sequence, 479 residues long: Sulfate adenylyltransferase subunit 1 (479 aa).

Positions 25-239 (KSLLRFLTCG…EVLETVDIQR (215 aa)) constitute a tr-type G domain. Residues 34-41 (GSVDDGKS) form a G1 region. 34–41 (GSVDDGKS) provides a ligand contact to GTP. A G2 region spans residues 92-96 (GITID). The G3 stretch occupies residues 113-116 (DTPG). Residues 113-117 (DTPGH) and 168-171 (NKMD) each bind GTP. The interval 168-171 (NKMD) is G4. The interval 206 to 208 (SAL) is G5.

Belongs to the TRAFAC class translation factor GTPase superfamily. Classic translation factor GTPase family. CysN/NodQ subfamily. Heterodimer composed of CysD, the smaller subunit, and CysN.

The catalysed reaction is sulfate + ATP + H(+) = adenosine 5'-phosphosulfate + diphosphate. Its pathway is sulfur metabolism; hydrogen sulfide biosynthesis; sulfite from sulfate: step 1/3. Its function is as follows. With CysD forms the ATP sulfurylase (ATPS) that catalyzes the adenylation of sulfate producing adenosine 5'-phosphosulfate (APS) and diphosphate, the first enzymatic step in sulfur assimilation pathway. APS synthesis involves the formation of a high-energy phosphoric-sulfuric acid anhydride bond driven by GTP hydrolysis by CysN coupled to ATP hydrolysis by CysD. The polypeptide is Sulfate adenylyltransferase subunit 1 (Salmonella typhi).